We begin with the raw amino-acid sequence, 98 residues long: DNA-binding protein Fis (98 aa).

Residues Q74–K93 constitute a DNA-binding region (H-T-H motif).

It belongs to the transcriptional regulatory Fis family. Homodimer.

In terms of biological role, activates ribosomal RNA transcription. Plays a direct role in upstream activation of rRNA promoters. This chain is DNA-binding protein Fis, found in Aeromonas hydrophila subsp. hydrophila (strain ATCC 7966 / DSM 30187 / BCRC 13018 / CCUG 14551 / JCM 1027 / KCTC 2358 / NCIMB 9240 / NCTC 8049).